The sequence spans 428 residues: CRISPR system endoribonuclease Csm6 (428 aa).

The tract at residues 1 to 145 (MKILISAVGT…RANREYTALT (145 aa)) is CARF domain. Positions 146–428 (ESEIDALIME…QNKELIKMLE (283 aa)) are HEPN domain.

Belongs to the CRISPR-associated Csm6 family. Homodimer. The composite ssRNase active site is formed at the dimer interface.

Non-specific ssRNase activity is allosterically activated about 1000-fold by cyclic hexaadenylate (cA6), a second messenger produced by Cas10 of the ternary Csm effector complex in the presence of a cognate target RNA. ssRNase activity is inhibited by physiological concentrations of ATP (1 mM), activity is restored by cOA. Its function is as follows. CRISPR (clustered regularly interspaced short palindromic repeat) is an adaptive immune system that provides protection against mobile genetic elements (viruses, transposable elements and conjugative plasmids). CRISPR clusters contain spacers, sequences complementary to antecedent mobile elements, and target invading nucleic acids. CRISPR clusters are transcribed and processed into CRISPR RNA (crRNA). The type III-A Csm complex binds crRNA and acts as a crRNA-guided RNase, DNase and cyclic oligoadenylate synthase; binding of target RNA cognate to the crRNA is required for all activities. In a heterologous host this Csm effector complex restricts ssRNA phage MS2, suggesting it may target RNA viruses in vivo. This protein is not part of the Csm complex. Functionally, csm functions as a non-specific ssDNase. Base-pairing between crRNA and target RNA to form a ternary Csm complex activates a ssDNase activity; target RNA cleavage suppresses the ssDNase, a temporal control that prevents uncontrolled DNA degradation. Viral RNA transcripts probably tether the Csm complex to the viral genome, recruiting Cas10 ssDNA activity which is able to degrade DNA in the transcription bubble, spatially controlling the DNase activity. In terms of biological role, a single-strand-specific endoribonuclease (ssRNase) that is approximately 1000-fold stimulated by cyclic oligoadenylate (cOA); although several species of cOA are synthesized by this organism only cyclic hexaadenylate (cA6) stimulates the ssRNase activity. Cleaves preferentially within GA or AA dinucleotides, although the presence of cA6 broadens the preference. Linear oligoadenylates do not activate the RNase. The sequence is that of CRISPR system endoribonuclease Csm6 from Streptococcus thermophilus.